A 161-amino-acid chain; its full sequence is Phosphopantetheine adenylyltransferase (161 aa).

Ser-11 is a substrate binding site. Residues Ser-11 to Phe-12 and His-19 each bind ATP. 3 residues coordinate substrate: Lys-43, Leu-75, and Arg-89. Residues Gly-90–Arg-92, Glu-100, and Tyr-125–Ser-131 each bind ATP.

This sequence belongs to the bacterial CoaD family. Homohexamer. The cofactor is Mg(2+).

The protein localises to the cytoplasm. It carries out the reaction (R)-4'-phosphopantetheine + ATP + H(+) = 3'-dephospho-CoA + diphosphate. Its pathway is cofactor biosynthesis; coenzyme A biosynthesis; CoA from (R)-pantothenate: step 4/5. Functionally, reversibly transfers an adenylyl group from ATP to 4'-phosphopantetheine, yielding dephospho-CoA (dPCoA) and pyrophosphate. In Staphylococcus epidermidis (strain ATCC 35984 / DSM 28319 / BCRC 17069 / CCUG 31568 / BM 3577 / RP62A), this protein is Phosphopantetheine adenylyltransferase.